A 313-amino-acid polypeptide reads, in one-letter code: N-acetyl-gamma-glutamyl-phosphate reductase (313 aa).

C117 is a catalytic residue.

It belongs to the NAGSA dehydrogenase family. Type 2 subfamily.

The protein resides in the cytoplasm. It catalyses the reaction N-acetyl-L-glutamate 5-semialdehyde + phosphate + NADP(+) = N-acetyl-L-glutamyl 5-phosphate + NADPH + H(+). Its pathway is amino-acid biosynthesis; L-arginine biosynthesis; N(2)-acetyl-L-ornithine from L-glutamate: step 3/4. Its function is as follows. Catalyzes the NADPH-dependent reduction of N-acetyl-5-glutamyl phosphate to yield N-acetyl-L-glutamate 5-semialdehyde. In Burkholderia cenocepacia (strain ATCC BAA-245 / DSM 16553 / LMG 16656 / NCTC 13227 / J2315 / CF5610) (Burkholderia cepacia (strain J2315)), this protein is N-acetyl-gamma-glutamyl-phosphate reductase.